A 732-amino-acid polypeptide reads, in one-letter code: Catalase-peroxidase (732 aa).

The segment at residues 97-220 is a cross-link (tryptophyl-tyrosyl-methioninium (Trp-Tyr) (with M-246)); it reads WHSAGTYRTS…LAAVQMGLIY (124 aa). Histidine 98 (proton acceptor) is an active-site residue. Residues 220–246 constitute a cross-link (tryptophyl-tyrosyl-methioninium (Tyr-Met) (with W-97)); sequence YVNPEGPDGNPDPVAAGRDIRETFARM. Histidine 261 lines the heme b pocket.

Belongs to the peroxidase family. Peroxidase/catalase subfamily. As to quaternary structure, homodimer or homotetramer. Heme b is required as a cofactor. In terms of processing, formation of the three residue Trp-Tyr-Met cross-link is important for the catalase, but not the peroxidase activity of the enzyme.

The enzyme catalyses H2O2 + AH2 = A + 2 H2O. It catalyses the reaction 2 H2O2 = O2 + 2 H2O. Functionally, bifunctional enzyme with both catalase and broad-spectrum peroxidase activity. This is Catalase-peroxidase from Pelodictyon phaeoclathratiforme (strain DSM 5477 / BU-1).